The sequence spans 571 residues: Protein tesmin/TSO1-like CXC 6 (571 aa).

Disordered regions lie at residues 1–52, 92–119, 293–325, 370–411, and 507–571; these read MGEG…AAAS, IRHP…QKKK, NQGT…GGNA, LANQ…RSLS, and NGVS…KKDL. Positions 7 to 16 are enriched in basic and acidic residues; it reads GDKFPPKTDE. In terms of domain architecture, CRC spans 117 to 241; it reads KKKQCNCKHS…KCLDCKNFEG (125 aa). Composition is skewed to polar residues over residues 293–319, 373–388, and 508–539; these read NQGT…QTGS, QKET…QGHV, and GVSQ…QTAK. Positions 540-557 are enriched in low complexity; it reads QPSQLTTTTTTPNTSSQT.

This sequence belongs to the lin-54 family. In terms of tissue distribution, ubiquitous but expressed mostly in flowers.

The protein resides in the nucleus. Functionally, plays a role in development of both male and female reproductive tissues. This Arabidopsis thaliana (Mouse-ear cress) protein is Protein tesmin/TSO1-like CXC 6 (TCX6).